A 288-amino-acid polypeptide reads, in one-letter code: Homoserine kinase (288 aa).

Residue 79–89 (PPARGLGSSSA) coordinates ATP.

It belongs to the GHMP kinase family. Homoserine kinase subfamily.

It is found in the cytoplasm. It catalyses the reaction L-homoserine + ATP = O-phospho-L-homoserine + ADP + H(+). The protein operates within amino-acid biosynthesis; L-threonine biosynthesis; L-threonine from L-aspartate: step 4/5. In terms of biological role, catalyzes the ATP-dependent phosphorylation of L-homoserine to L-homoserine phosphate. The chain is Homoserine kinase from Listeria innocua serovar 6a (strain ATCC BAA-680 / CLIP 11262).